We begin with the raw amino-acid sequence, 154 residues long: Myoglobin (154 aa).

Residues 2–148 form the Globin domain; the sequence is GLSDGEWQLV…FRKDIAAKYK (147 aa). Ser-4 carries the post-translational modification Phosphoserine. His-65 is a binding site for nitrite. His-65 lines the O2 pocket. Thr-68 carries the phosphothreonine modification. His-94 is a heme b binding site.

The protein belongs to the globin family. In terms of assembly, monomeric.

Its subcellular location is the cytoplasm. The protein localises to the sarcoplasm. It catalyses the reaction Fe(III)-heme b-[protein] + nitric oxide + H2O = Fe(II)-heme b-[protein] + nitrite + 2 H(+). It carries out the reaction H2O2 + AH2 = A + 2 H2O. Monomeric heme protein which primary function is to store oxygen and facilitate its diffusion within muscle tissues. Reversibly binds oxygen through a pentacoordinated heme iron and enables its timely and efficient release as needed during periods of heightened demand. Depending on the oxidative conditions of tissues and cells, and in addition to its ability to bind oxygen, it also has a nitrite reductase activity whereby it regulates the production of bioactive nitric oxide. Under stress conditions, like hypoxia and anoxia, it also protects cells against reactive oxygen species thanks to its pseudoperoxidase activity. This Castor fiber (Eurasian beaver) protein is Myoglobin (MB).